The sequence spans 272 residues: Acidic leucine-rich nuclear phosphoprotein 32 family member B (272 aa).

LRR repeat units follow at residues 16–40 (PAAVQELVLDNCKANDGKIEGLTDE), 43–64 (NLEFLSLINVGLFSVSDLPKLP), 65–84 (KLKKLELSENRIFGGLDRLA), and 89–110 (SLTHLNLSGNNLKDISTLEPLK). The region spanning 123–161 (CEVTNRSDYRETVFRLLPQLSYLDGYDREDQEAPDSDVE) is the LRRCT domain. Acidic residues predominate over residues 149–254 (DREDQEAPDS…DEDEDEEEEE (106 aa)). A disordered region spans residues 149 to 272 (DREDQEAPDS…RETDDEGEDD (124 aa)). Residues S164 and S171 each carry the phosphoserine modification. Basic and acidic residues predominate over residues 255–265 (SGKGEKRKRET). Positions 260 to 263 (KRKR) match the Nuclear localization signal motif. The residue at position 265 (T265) is a Phosphothreonine.

It belongs to the ANP32 family. In terms of assembly, interacts with histones H3 and H4. Interacts with KLF5; this interaction induces promoter region-specific histone incorporation and inhibition of histone acetylation by ANP32B. Post-translationally, some glutamate residues are glycylated by TTLL8. This modification occurs exclusively on glutamate residues and results in a glycine chain on the gamma-carboxyl group. Directly cleaved by caspase-3/CASP3. Predominantly expressed in brain. Expressed in the entire embryonic brain, whereas in the adult brain its expression is restricted to the subventricular zone where there are neural progenitor cells.

The protein resides in the nucleus. In terms of biological role, multifunctional protein that is involved in the regulation of many processes including cell proliferation, apoptosis, cell cycle progression or transcription. Regulates the proliferation of neuronal stem cells, differentiation of leukemic cells and progression from G1 to S phase of the cell cycle. As negative regulator of caspase-3-dependent apoptosis, may act as an antagonist of ANP32A in regulating tissue homeostasis. Exhibits histone chaperone properties, able to recruit histones to certain promoters, thus regulating the transcription of specific genes. Also plays an essential role in the nucleocytoplasmic transport of specific mRNAs via the uncommon nuclear mRNA export receptor XPO1/CRM1. Participates in the regulation of adequate adaptive immune responses by acting on mRNA expression and cell proliferation. This Rattus norvegicus (Rat) protein is Acidic leucine-rich nuclear phosphoprotein 32 family member B (Anp32b).